Reading from the N-terminus, the 321-residue chain is LAGVEGIGVNYGMMGSDLPSPDKVVALYKANNITDVRIFHPDTNVLEALRNSGLGVVLGTLNSDLAPLASDASYAASWVHSYVQPFAGAVSFRYINAGNEVIPGESAALVLPAMKNLEAALQAAGLSVPVTTAMATSVLGTSYPPSQGTFSEAALPTVGPIVSHLASSGTPLLVNVYPYFAYSADPSSVRLDYALLSSSAAVAVTDNGVEYANMFDAILDAVYAAVEKAGGGESLELVVSETGWPSGGGGYGASVENAAAYINNLVRHVGGTPRRPGKAVETYIFAMFNENQKPEGVEQNFGMFQPDMSQVYHVDFTASSS.

The N-terminal stretch at 1–6 (LAGVEG) is a signal peptide. The active-site Proton donor is Glu100. Glu241 (nucleophile) is an active-site residue.

The protein belongs to the glycosyl hydrolase 17 family.

It carries out the reaction Hydrolysis of (1-&gt;3)-beta-D-glucosidic linkages in (1-&gt;3)-beta-D-glucans.. Its function is as follows. May provide a degree of protection against microbial invasion of germinated barley grain through its ability to degrade fungal cell wall polysaccharides. The protein is Putative glucan endo-1,3-beta-glucosidase GVI of Hordeum vulgare (Barley).